The chain runs to 509 residues: 2,3-bisphosphoglycerate-independent phosphoglycerate mutase (509 aa).

Residues D14 and S64 each contribute to the Mn(2+) site. S64 acts as the Phosphoserine intermediate in catalysis. Substrate is bound by residues H125, 155 to 156 (RD), R187, R193, 259 to 262 (RADR), and K332. D399, H403, D440, H441, and H459 together coordinate Mn(2+).

The protein belongs to the BPG-independent phosphoglycerate mutase family. As to quaternary structure, monomer. It depends on Mn(2+) as a cofactor.

The enzyme catalyses (2R)-2-phosphoglycerate = (2R)-3-phosphoglycerate. It participates in carbohydrate degradation; glycolysis; pyruvate from D-glyceraldehyde 3-phosphate: step 3/5. Catalyzes the interconversion of 2-phosphoglycerate and 3-phosphoglycerate. The polypeptide is 2,3-bisphosphoglycerate-independent phosphoglycerate mutase (Psychromonas ingrahamii (strain DSM 17664 / CCUG 51855 / 37)).